A 148-amino-acid polypeptide reads, in one-letter code: HTH-type transcriptional regulator BilQ (148 aa).

In terms of domain architecture, HTH marR-type spans 1–140; it reads MDFKNLQYES…LVKNLHVVKD (140 aa). A DNA-binding region (H-T-H motif) is located at residues 54–77; that stretch reads LNDVSTEFEVDKAHTTRTISRLEQ.

Transcription regulator that regulates expression of the bilirubin reductase operon (bilQ, bilR and bilS). This chain is HTH-type transcriptional regulator BilQ, found in Clostridioides difficile (strain CD3).